The primary structure comprises 525 residues: GMP synthase [glutamine-hydrolyzing] (525 aa).

The Glutamine amidotransferase type-1 domain maps to 9–207; it reads RILILDFGSQ…VLDICRCTPL (199 aa). Residue Cys-86 is the Nucleophile of the active site. Active-site residues include His-181 and Glu-183. Residues 208 to 400 form the GMPS ATP-PPase domain; that stretch reads WTPAKIIEDA…LGLPYDMLYR (193 aa). 235 to 241 is an ATP binding site; sequence SGGVDSS.

As to quaternary structure, homodimer.

The catalysed reaction is XMP + L-glutamine + ATP + H2O = GMP + L-glutamate + AMP + diphosphate + 2 H(+). The protein operates within purine metabolism; GMP biosynthesis; GMP from XMP (L-Gln route): step 1/1. Its function is as follows. Catalyzes the synthesis of GMP from XMP. The protein is GMP synthase [glutamine-hydrolyzing] of Sodalis glossinidius (strain morsitans).